The sequence spans 801 residues: Palmitoyl thioesterase CPT1C (801 aa).

Topologically, residues 1–49 (MAEAHQASSLLSSLSSDGAEVELSSSVWQEIYLSALRSWKRNLWRVWND) are cytoplasmic. Residues 50 to 70 (FLAGVVPATPLSWLFLFSTIQ) traverse the membrane as a helical segment. Residues 71 to 103 (LACLLQLDPSLGLMEKIKELLPDWGGQHHQLQG) are Mitochondrial intermembrane-facing. The helical transmembrane segment at 104-124 (LLAAAVFASCLWGTLIFTLHV) threads the bilayer. The Cytoplasmic portion of the chain corresponds to 125–801 (ALRLLLSHHG…PNIPKSSTNL (677 aa)). Catalysis depends on H469, which acts as the Proton acceptor. Residue 551–563 (GKSFIKGCHVSSD) participates in CoA binding. (R)-carnitine-binding residues include Y585, S587, and T598. Residues 760 to 801 (LFQAGQQFKRQFTGLGESSGWKYSNLSCKTVDPNIPKSSTNL) are required for interaction with GRIA1.

The protein belongs to the carnitine/choline acetyltransferase family. In terms of assembly, peripherally associated with AMPAR complex. AMPAR complex consists of an inner core made of 4 pore-forming GluA/GRIA proteins (GRIA1, GRIA2, GRIA3 and GRIA4) and 4 major auxiliary subunits arranged in a twofold symmetry. One of the two pairs of distinct binding sites is occupied either by CNIH2, CNIH3 or CACNG2, CACNG3. The other harbors CACNG2, CACNG3, CACNG4, CACNG8 or GSG1L. This inner core of AMPAR complex is complemented by outer core constituents binding directly to the GluA/GRIA proteins at sites distinct from the interaction sites of the inner core constituents. Outer core constituents include at least PRRT1, PRRT2, CKAMP44/SHISA9, FRRS1L and NRN1. The proteins of the inner and outer core serve as a platform for other, more peripherally associated AMPAR constituents, including CPT1C. Alone or in combination, these auxiliary subunits control the gating and pharmacology of the AMPAR complex and profoundly impact their biogenesis and protein processing. Interacts with SACM1L; the interaction regulates SACM1L phosphatidylinositol-3-phosphatase activity and translocation to endoplasmic reticulum/trans Golgi network in a malonyl-CoA dependent manner. Interacts with ATL1. As to expression, expressed in brain (at protein level).

Its subcellular location is the synapse. The protein localises to the cell projection. The protein resides in the dendrite. It is found in the axon. It localises to the endoplasmic reticulum membrane. The enzyme catalyses S-hexadecanoyl-L-cysteinyl-[protein] + H2O = L-cysteinyl-[protein] + hexadecanoate + H(+). Functionally, palmitoyl thioesterase specifically expressed in the endoplasmic reticulum of neurons. Modulates the trafficking of the glutamate receptor, AMPAR, to plasma membrane through depalmitoylation of GRIA1. Also regulates AMPR trafficking through the regulation of SACM1L phosphatidylinositol-3-phosphatase activity by interaction in a malonyl-CoA dependent manner. Binds malonyl-CoA and couples malonyl-CoA to ceramide levels, necessary for proper spine maturation and contributing to systemic energy homeostasis and appetite control. Binds to palmitoyl-CoA, but does not have carnitine palmitoyltransferase 1 catalytic activity or at very low levels. The sequence is that of Palmitoyl thioesterase CPT1C (Cpt1c) from Rattus norvegicus (Rat).